The sequence spans 236 residues: GTP cyclohydrolase 1 (236 aa).

Positions 1–52 are disordered; the sequence is MAAARSCNGYARREGPPSPKLGTEKPRVSAGSGGSGDGWRGERPRSEEDNEL. C127, H130, and C198 together coordinate Zn(2+).

Belongs to the GTP cyclohydrolase I family. In terms of assembly, toroid-shaped homodecamer, composed of two pentamers of five dimers.

It is found in the cytoplasm. The protein localises to the nucleus. It catalyses the reaction GTP + H2O = 7,8-dihydroneopterin 3'-triphosphate + formate + H(+). Its pathway is cofactor biosynthesis; 7,8-dihydroneopterin triphosphate biosynthesis; 7,8-dihydroneopterin triphosphate from GTP: step 1/1. Its activity is regulated as follows. GTP shows a positive allosteric effect, and tetrahydrobiopterin inhibits the enzyme activity. Zinc is required for catalytic activity. Inhibited by Mg(2+). May positively regulate nitric oxide synthesis in endothelial cells. May be involved in dopamine synthesis. May modify pain sensitivity and persistence. This Gallus gallus (Chicken) protein is GTP cyclohydrolase 1 (GCH1).